The primary structure comprises 840 residues: Serotype-specific mannosyltransferase WbdA (840 aa).

Positions 2–399 (HILIDVQGYQ…WANTAHLAIE (398 aa)) are alpha-(1-&gt;2)-mannosyltransferase. The alpha-(1-&gt;3)-mannosyltransferase stretch occupies residues 456–829 (KLLVDISVLA…WKQSAEFLLK (374 aa)).

Belongs to the glycosyltransferase group 1 family. Glycosyltransferase 4 subfamily. In terms of assembly, monomer. Interacts with the C-terminal region of WbdD. Interacts with WbdD via a surface-exposed alpha-helix in the C-terminal mannosyltransferase domain. However, the C-terminal domain is unable to interact with WbdD in the absence of its N-terminal partner.

It is found in the cell inner membrane. It carries out the reaction [alpha-D-Man-(1-&gt;3)-alpha-D-Man-(1-&gt;3)-alpha-D-Man-(1-&gt;2)-alpha-D-Man-(1-&gt;2)](n)-alpha-D-Man-(1-&gt;3)-alpha-D-Man-(1-&gt;3)-alpha-D-Man-(1-&gt;3)-alpha-D-GlcNAc-di-trans,octa-cis-undecaprenyl diphosphate + 2 GDP-alpha-D-mannose = alpha-D-Man-(1-&gt;2)-alpha-D-Man-(1-&gt;2)-[alpha-D-Man-(1-&gt;3)-alpha-D-Man-(1-&gt;3)-alpha-D-Man-(1-&gt;2)-alpha-D-Man-(1-&gt;2)](n)-alpha-D-Man-(1-&gt;3)-alpha-D-Man-(1-&gt;3)-alpha-D-Man-(1-&gt;3)-alpha-D-GlcNAc-di-trans,octa-cis-undecaprenyl diphosphate + 2 GDP + 2 H(+). The enzyme catalyses alpha-D-Man-(1-&gt;2)-alpha-D-Man-(1-&gt;2)-[alpha-D-Man-(1-&gt;3)-alpha-D-Man-(1-&gt;3)-alpha-D-Man-(1-&gt;2)-alpha-D-Man-(1-&gt;2)](n)-alpha-D-Man-(1-&gt;3)-alpha-D-Man-(1-&gt;3)-alpha-D-Man-(1-&gt;3)-alpha-D-GlcNAc-di-trans,octa-cis-undecaprenyl diphosphate + 2 GDP-alpha-D-mannose = [alpha-D-Man-(1-&gt;3)-alpha-D-Man-(1-&gt;3)-alpha-D-Man-(1-&gt;2)-alpha-D-Man-(1-&gt;2)](n+1)-alpha-D-Man-(1-&gt;3)-alpha-D-Man-(1-&gt;3)-alpha-D-Man-(1-&gt;3)-alpha-D-GlcNAc-di-trans,octa-cis-undecaprenyl diphosphate + 2 GDP + 2 H(+). It participates in bacterial outer membrane biogenesis; LPS O-antigen biosynthesis. The alpha-(1-&gt;2)-mannosyltransferase activity of the N-terminal domain is regulated by the activity of the C-terminal alpha-(1-&gt;3)-mannosyltransferase. The relative concentration of WbdA and WbdD is critical in determining the O polysaccharide (OPS) modal chain length. OPS chain length increases with increasing concentration of WbdA, but the maximum length does not increase beyond the wild-type modal length, despite substantial increases in WbdA concentration. Its function is as follows. Mannosyltransferase involved in the biosynthesis of the repeat unit of the lipopolysaccharide (LPS) O-antigen region. Catalyzes the polymerization of a tetrasaccharide repeat unit containing two alpha-(1-&gt;3)- and two alpha-(1-&gt;2)-linked mannopyranose residues. Extension is terminated by the action of the chain terminator bifunctional methyltransferase/kinase WbdD. The protein is Serotype-specific mannosyltransferase WbdA of Escherichia coli.